The following is a 156-amino-acid chain: Small ribosomal subunit protein uS7 (156 aa).

Belongs to the universal ribosomal protein uS7 family. Part of the 30S ribosomal subunit. Contacts proteins S9 and S11.

Functionally, one of the primary rRNA binding proteins, it binds directly to 16S rRNA where it nucleates assembly of the head domain of the 30S subunit. Is located at the subunit interface close to the decoding center, probably blocks exit of the E-site tRNA. The chain is Small ribosomal subunit protein uS7 from Herminiimonas arsenicoxydans.